We begin with the raw amino-acid sequence, 273 residues long: MSVQTTKRRLSPASIEALKGERPIVSLTAYTTPIARLLDPHVDFLLVGDSLGMVLYGLDTTVGVTLDMMIAHGQAVMRGSERSCIVIDLPFGSYQESKEQAFRSAARILKETGCSAVKLEGGAEMAETVDFLVSRGIPVLGHVGLMPQLVNTTGGYRSVGRNEKEVAKIRRDAKAIDDAGAFAIVVEGTVEPVAREITATLRCPTIGIGASPACDGQILVSDDMLGIFNDFKPRFVKHFAELAPAISKAVEDYANEVKARTFPGIEHTFQVKR.

Mg(2+)-binding residues include D49 and D88. Residues 49–50 (DS), D88, and K118 each bind 3-methyl-2-oxobutanoate. Position 120 (E120) interacts with Mg(2+). E187 (proton acceptor) is an active-site residue.

The protein belongs to the PanB family. In terms of assembly, homodecamer; pentamer of dimers. Requires Mg(2+) as cofactor.

The protein resides in the cytoplasm. It carries out the reaction 3-methyl-2-oxobutanoate + (6R)-5,10-methylene-5,6,7,8-tetrahydrofolate + H2O = 2-dehydropantoate + (6S)-5,6,7,8-tetrahydrofolate. Its pathway is cofactor biosynthesis; (R)-pantothenate biosynthesis; (R)-pantoate from 3-methyl-2-oxobutanoate: step 1/2. Functionally, catalyzes the reversible reaction in which hydroxymethyl group from 5,10-methylenetetrahydrofolate is transferred onto alpha-ketoisovalerate to form ketopantoate. This Sinorhizobium fredii (strain NBRC 101917 / NGR234) protein is 3-methyl-2-oxobutanoate hydroxymethyltransferase.